An 8515-amino-acid chain; its full sequence is Nonribosomal peptide synthetase 8 (8515 aa).

2 adenylation regions span residues 59 to 736 and 1163 to 1705; these read REHH…YRCS and AKLS…EWVE. Residues 587-1159 form a condensation 1 region; that stretch reads RRVVQWLENL…TVGEVALVGD (573 aa). A Carrier 1 domain is found at 615 to 691; the sequence is EPETAMERRL…ELAPRVKVAE (77 aa). At Ser-652 the chain carries O-(pantetheine 4'-phosphoryl)serine. Positions 1732-1808 constitute a Carrier 2 domain; the sequence is RGLTPTETVI…KLGRHADHSS (77 aa). Ser-1769 is modified (O-(pantetheine 4'-phosphoryl)serine). The tract at residues 1830 to 2273 is epimerase 1; the sequence is LSPIQQWFFE…TLYDCPLAAL (444 aa). A condensation 2 region spans residues 2301 to 2709; the sequence is SHIQEGILLS…RSPEAVLHDL (409 aa). Residues 2733 to 3266 form an adenylation 3 region; sequence QCLHWLIEQW…RMILSWLSEP (534 aa). Residues 3286-3362 enclose the Carrier 3 domain; the sequence is TTLGPVEKQM…KVTPRTISLS (77 aa). The residue at position 3323 (Ser-3323) is an O-(pantetheine 4'-phosphoryl)serine. Residues 3406-3819 are condensation 3; the sequence is SPMQEGILLA…DNSGCSVKTV (414 aa). The 77-residue stretch at 3857 to 3933 folds into the Carrier 4 domain; it reads EPTNLIALTV…EVFEHARFSD (77 aa). O-(pantetheine 4'-phosphoryl)serine is present on Ser-3894. The tract at residues 3953 to 4392 is epimerase 2; the sequence is LSPIQKLHFH…TPSDFQLLSL (440 aa). The interval 4420 to 4823 is condensation 4; sequence PCSPMQEGIL…ARPRARLGTI (404 aa). Residues 4837–5363 are adenylation 4; that stretch reads WNEQARRPVV…RKVNKWLESF (527 aa). Residues 5385–5461 enclose the Carrier 5 domain; that stretch reads PPLTPIQQTI…SLAACATAII (77 aa). Ser-5422 is subject to O-(pantetheine 4'-phosphoryl)serine. The segment at 5508-5923 is condensation 5; it reads SPMQEGILFS…SLVDHLSLCS (416 aa). The tract at residues 5941-6459 is adenylation 5; sequence ELRQCLHELI…GKVDRQALRR (519 aa). In terms of domain architecture, Carrier 6 spans 6482–6558; that stretch reads PISTAEEQQM…DLATLLESPA (77 aa). Position 6519 is an O-(pantetheine 4'-phosphoryl)serine (Ser-6519). Residues 6606–6992 form a condensation 6 region; that stretch reads CTPLQESLMA…SQMKSVMGTL (387 aa). An adenylation 6 region spans residues 7030 to 7544; sequence VEDLIISRAQ…SSGKLARKGV (515 aa). In terms of domain architecture, Carrier 7 spans 7575–7651; the sequence is IASSSVERAI…HLASREDLTA (77 aa). Ser-7612 is subject to O-(pantetheine 4'-phosphoryl)serine. Residues 7670 to 8119 form an epimerase 3 region; that stretch reads LTPIQRFFFC…DYPRARLDYT (450 aa). The segment at 8164–8504 is condensation 7; it reads HFIWKIAGTK…DPTSPLQFAD (341 aa). Residues 8488-8500 are compositionally biased toward polar residues; the sequence is AVNSVSSDPTSPL. Residues 8488–8515 form a disordered region; that stretch reads AVNSVSSDPTSPLQFADGQDPMPVSHQP.

Belongs to the NRP synthetase family.

Nonribosomal peptide synthesis (NRPS) is a key mechanism responsible for the biosynthesis of bioactive metabolites which are potentially contributing to organismal virulence. However, contarary to other nonribosomal peptide synthases, NRPS8 does not encode a secreted peptide, but has more a structural role since it is involved in germ tube formation. The polypeptide is Nonribosomal peptide synthetase 8 (NRPS8) (Aspergillus fumigatus (strain ATCC MYA-4609 / CBS 101355 / FGSC A1100 / Af293) (Neosartorya fumigata)).